A 74-amino-acid chain; its full sequence is Small cysteine-rich protein 8 (74 aa).

Residues 1-21 (MAAKFHLCLLLIILGTITVQG) form the signal peptide. The propeptide occupies 22–31 (ARHPGKPHFF).

It belongs to the Cnidaria small cysteine-rich protein (SCRiP) family. beta subfamily. Contains 4 disulfide bonds.

Its subcellular location is the secreted. The protein localises to the nematocyst. Induces neurotoxic symptoms on zebrafish. Has also been claimed to be implied in calcification, but tests on homolog proteins suggest that proteins of this family have a neurotoxic function and not a calcification function. The chain is Small cysteine-rich protein 8 from Orbicella faveolata (Mountainous star coral).